The chain runs to 637 residues: DNA mismatch repair protein MutL (637 aa).

Residues 353 to 371 show a composition bias toward polar residues; sequence GQGQRPVSSASMPSASRQA. The tract at residues 353-444 is disordered; it reads GQGQRPVSSA…SEAASETPHD (92 aa). Residues 378–389 show a composition bias toward basic and acidic residues; that stretch reads DWIKEGVQDWDW. The segment covering 396-406 has biased composition (pro residues); sequence PQNPPQNPPPG. Residues 430–444 are compositionally biased toward basic and acidic residues; that stretch reads SGKELSEAASETPHD.

This sequence belongs to the DNA mismatch repair MutL/HexB family.

Functionally, this protein is involved in the repair of mismatches in DNA. It is required for dam-dependent methyl-directed DNA mismatch repair. May act as a 'molecular matchmaker', a protein that promotes the formation of a stable complex between two or more DNA-binding proteins in an ATP-dependent manner without itself being part of a final effector complex. The chain is DNA mismatch repair protein MutL from Beijerinckia indica subsp. indica (strain ATCC 9039 / DSM 1715 / NCIMB 8712).